A 179-amino-acid polypeptide reads, in one-letter code: MMARDPDWLLVGQVVAAHGLRGWLRVRCWSDFPERFTEPGPRWLQRDTDPEPLLHPLIEGQFFPAKGLYLVRLEGIPNRTVAETWVGARLLVPASHRLPLQPEEYHYRDLIGLAVYHQGELLGQVSGILAAGQDVLEITTSDHRQVLIPFVKALVPVVDLEKGALHVQPPPGLVESFLG.

A PRC barrel domain is found at 102-173 (PEEYHYRDLI…ALHVQPPPGL (72 aa)).

Belongs to the RimM family. As to quaternary structure, binds ribosomal protein uS19.

It localises to the cytoplasm. Functionally, an accessory protein needed during the final step in the assembly of 30S ribosomal subunit, possibly for assembly of the head region. Essential for efficient processing of 16S rRNA. May be needed both before and after RbfA during the maturation of 16S rRNA. It has affinity for free ribosomal 30S subunits but not for 70S ribosomes. The polypeptide is Ribosome maturation factor RimM (Synechococcus sp. (strain JA-2-3B'a(2-13)) (Cyanobacteria bacterium Yellowstone B-Prime)).